A 298-amino-acid polypeptide reads, in one-letter code: Bifunctional protein FolD (298 aa).

NADP(+) contacts are provided by residues 167-169 (GRS), serine 192, and isoleucine 233.

This sequence belongs to the tetrahydrofolate dehydrogenase/cyclohydrolase family. As to quaternary structure, homodimer.

The enzyme catalyses (6R)-5,10-methylene-5,6,7,8-tetrahydrofolate + NADP(+) = (6R)-5,10-methenyltetrahydrofolate + NADPH. The catalysed reaction is (6R)-5,10-methenyltetrahydrofolate + H2O = (6R)-10-formyltetrahydrofolate + H(+). The protein operates within one-carbon metabolism; tetrahydrofolate interconversion. Functionally, catalyzes the oxidation of 5,10-methylenetetrahydrofolate to 5,10-methenyltetrahydrofolate and then the hydrolysis of 5,10-methenyltetrahydrofolate to 10-formyltetrahydrofolate. This is Bifunctional protein FolD from Caulobacter sp. (strain K31).